A 161-amino-acid chain; its full sequence is Negative cofactor 2 complex subunit beta (161 aa).

One can recognise a Histone-fold domain in the interval 11 to 75; the sequence is SLPKATVQKM…IAAEHIIKAL (65 aa). Positions 93 to 107 are enriched in basic and acidic residues; sequence EHKEQQKNREKKSSK. Disordered stretches follow at residues 93–116 and 130–161; these read EHKE…VSRD and RERF…TKEN. Over residues 135-147 the composition is skewed to polar residues; sequence NQNIAHDNHTTTA.

Belongs to the NC2 beta/DR1 family.

Its subcellular location is the cytoplasm. The protein localises to the nucleus. In Schizosaccharomyces pombe (strain 972 / ATCC 24843) (Fission yeast), this protein is Negative cofactor 2 complex subunit beta (ncb2).